We begin with the raw amino-acid sequence, 328 residues long: Cytochrome c biogenesis protein CcsA (328 aa).

8 helical membrane passes run 13 to 33 (ISFS…LVNL), 46 to 66 (GIVI…IYSG), 73 to 93 (LYES…VSYF), 101 to 121 (LNAI…SGLL), 146 to 166 (MVLG…LLVI), 234 to 254 (IISL…VWAN), 263 to 283 (WDPK…YLHI), and 295 to 315 (AIVA…VNLL).

It belongs to the CcmF/CycK/Ccl1/NrfE/CcsA family. In terms of assembly, may interact with Ccs1.

It is found in the plastid. The protein localises to the chloroplast thylakoid membrane. Required during biogenesis of c-type cytochromes (cytochrome c6 and cytochrome f) at the step of heme attachment. This chain is Cytochrome c biogenesis protein CcsA, found in Aethionema cordifolium (Lebanon stonecress).